Reading from the N-terminus, the 249-residue chain is 1-(5-phosphoribosyl)-5-[(5-phosphoribosylamino)methylideneamino] imidazole-4-carboxamide isomerase (249 aa).

The Proton acceptor role is filled by Asp-8. Asp-131 serves as the catalytic Proton donor.

This sequence belongs to the HisA/HisF family.

Its subcellular location is the cytoplasm. The catalysed reaction is 1-(5-phospho-beta-D-ribosyl)-5-[(5-phospho-beta-D-ribosylamino)methylideneamino]imidazole-4-carboxamide = 5-[(5-phospho-1-deoxy-D-ribulos-1-ylimino)methylamino]-1-(5-phospho-beta-D-ribosyl)imidazole-4-carboxamide. The protein operates within amino-acid biosynthesis; L-histidine biosynthesis; L-histidine from 5-phospho-alpha-D-ribose 1-diphosphate: step 4/9. The sequence is that of 1-(5-phosphoribosyl)-5-[(5-phosphoribosylamino)methylideneamino] imidazole-4-carboxamide isomerase from Nitrosomonas europaea (strain ATCC 19718 / CIP 103999 / KCTC 2705 / NBRC 14298).